Consider the following 536-residue polypeptide: Prolyl 3-hydroxylase sudestada1 (536 aa).

The segment at 1 to 35 is disordered; it reads METSSSSPVKPRRKDKDEDGRAEQEDSADQVGEPH. Over residues 14-24 the composition is skewed to basic and acidic residues; it reads KDKDEDGRAEQ. Positions 165 to 275 constitute a Fe2OG dioxygenase domain; sequence KLDYVSASCS…RLTINGWFHG (111 aa). Fe cation-binding residues include histidine 185 and aspartate 187. Tyrosine 199 lines the 2-oxoglutarate pocket. Fe cation is bound at residue histidine 254. Arginine 266 provides a ligand contact to 2-oxoglutarate. The segment at 467–486 is disordered; it reads PTAKAPTDGRRSDYDDEEED.

It belongs to the TPA1 family. As to quaternary structure, monomer. Fe(2+) serves as cofactor. The cofactor is L-ascorbate. As to expression, in third-instar larval tissues,highly expressed in the fat body, with significant expression in other organs including the brain, salivary glands, imaginal disks and gut.

The protein localises to the nucleus. It is found in the cytoplasm. The enzyme catalyses [ribosomal protein uS12]-L-proline + 2-oxoglutarate + O2 = [ribosomal protein uS12]-(3S)-3-hydroxy-L-proline + succinate + CO2. Prolyl 3-hydroxylase that catalyzes 3-hydroxylation of 'Pro-62' of small ribosomal subunit uS12 (RpS23), thereby regulating protein translation termination efficiency. In Drosophila melanogaster (Fruit fly), this protein is Prolyl 3-hydroxylase sudestada1 (sud1).